A 199-amino-acid chain; its full sequence is Pyrrolidone-carboxylate peptidase (199 aa).

Residues Glu-80, Cys-142, and His-166 contribute to the active site.

The protein belongs to the peptidase C15 family. In terms of assembly, homotetramer.

It is found in the cytoplasm. It carries out the reaction Release of an N-terminal pyroglutamyl group from a polypeptide, the second amino acid generally not being Pro.. Functionally, removes 5-oxoproline from various penultimate amino acid residues except L-proline. The polypeptide is Pyrrolidone-carboxylate peptidase (Oceanobacillus iheyensis (strain DSM 14371 / CIP 107618 / JCM 11309 / KCTC 3954 / HTE831)).